The following is a 287-amino-acid chain: MNNSEGLKSFQQSLADLPQWVSERLLQQINQLTNYEPVIGIMGKTGVGKSSLCNALFAGDISPVSDVAACTREPLRFRLQVGDRYITLMDLPGVGESGARDTEYAALYREQLPRLDLVLWLIKADDRALTVDEHFYHQVIGEVYRHKVLFVISQSDKAEPTSGGGQLSTAQKQNISRKICLLHELFQPVHPVCAVSVRLQWGLKVMAERMIKCLPREATSPVVSQLHPSFRTTVVREQARSDFGETVGAVLDSISAFPLIPAPVRAVIQAVRTTVVSVARAVWDFFF.

Residues 43–50 (GKTGVGKS), 90–93 (DLPG), and 156–159 (DKAE) contribute to the GTP site. Residues 48-138 (GKSSLCNALF…LTVDEHFYHQ (91 aa)) form the G domain.

The protein to E.coli YfjP and YeeP.

This is an uncharacterized protein from Escherichia coli (strain K12).